Consider the following 437-residue polypeptide: Carbonic anhydrase 9 (437 aa).

An N-terminal signal peptide occupies residues 1–31 (MASLGPSPWAPLSTPAPTAQLLLFLLLQVSA). The segment at 32-95 (QPQGLSGMQG…RMEESLGLED (64 aa)) is proteoglycan-like (PG). At 32–390 (QPQGLSGMQG…HVNSCFTAGD (359 aa)) the chain is on the extracellular side. The segment at 34–118 (QGLSGMQGEP…HGDEKGGGHS (85 aa)) is disordered. Residues 50–79 (SGEDELGVDVLPSEEDAPEEADPPDGEDPP) are compositionally biased toward acidic residues. The interval 96-390 (LSTPEAPEHS…HVNSCFTAGD (295 aa)) is catalytic. O-linked (GlcNAc...) threonine glycosylation is present at Thr98. Positions 118-369 (SHWSYGGTLL…LNGRTIEASF (252 aa)) constitute an Alpha-carbonic anhydrase domain. A disulfide bond links Cys135 and Cys315. His179 acts as the Proton donor/acceptor in catalysis. Residues His205, His207, and His230 each contribute to the Zn(2+) site. 311-312 (TT) contacts substrate. A glycan (N-linked (GlcNAc...) asparagine) is linked at Asn325. Residues 391 to 411 (ILALVFGLLFAVTSIAFLLQL) traverse the membrane as a helical segment. Topologically, residues 412–437 (RRQHRHRSGTKDRVSYSPAEMTETGA) are cytoplasmic. Tyr427 bears the Phosphotyrosine mark.

This sequence belongs to the alpha-carbonic anhydrase family. Forms oligomers linked by disulfide bonds. The cofactor is Zn(2+). Post-translationally, asn-325 bears high-mannose type glycan structures.

It is found in the nucleus. The protein localises to the nucleolus. Its subcellular location is the cell membrane. It localises to the cell projection. The protein resides in the microvillus membrane. It carries out the reaction hydrogencarbonate + H(+) = CO2 + H2O. Its activity is regulated as follows. Inhibited by acetazolamide. In terms of biological role, catalyzes the interconversion between carbon dioxide and water and the dissociated ions of carbonic acid (i.e. bicarbonate and hydrogen ions). In Mus musculus (Mouse), this protein is Carbonic anhydrase 9 (Ca9).